Here is a 552-residue protein sequence, read N- to C-terminus: uncharacterized protein (552 aa).

A DhaL domain is found at 8 to 200 (KLFADMIIQG…LLCVYEGFLK (193 aa)).

This is an uncharacterized protein from Staphylococcus haemolyticus (strain JCSC1435).